A 490-amino-acid polypeptide reads, in one-letter code: ATP synthase subunit beta (490 aa).

173-180 (GGAGVGKT) is a binding site for ATP.

The protein belongs to the ATPase alpha/beta chains family. As to quaternary structure, F-type ATPases have 2 components, CF(1) - the catalytic core - and CF(0) - the membrane proton channel. CF(1) has five subunits: alpha(3), beta(3), gamma(1), delta(1), epsilon(1). CF(0) has three main subunits: a(1), b(2) and c(9-12). The alpha and beta chains form an alternating ring which encloses part of the gamma chain. CF(1) is attached to CF(0) by a central stalk formed by the gamma and epsilon chains, while a peripheral stalk is formed by the delta and b chains.

The protein localises to the cell membrane. The catalysed reaction is ATP + H2O + 4 H(+)(in) = ADP + phosphate + 5 H(+)(out). In terms of biological role, produces ATP from ADP in the presence of a proton gradient across the membrane. The catalytic sites are hosted primarily by the beta subunits. The polypeptide is ATP synthase subunit beta (Bifidobacterium longum subsp. infantis (strain ATCC 15697 / DSM 20088 / JCM 1222 / NCTC 11817 / S12)).